Reading from the N-terminus, the 570-residue chain is MSQTKPRDVQVLPIGTNTTVLRSRSWTRLRFEIEYALAKGTTANSYLIQGDKLALIDPPGETFTQIYLDALQKRLDVTEINYVILGHINPNRAATLKALLEIAPQITFVCSNPGAINLRGVLENPDLPMLIMRGEETLDLGKGHNLQFIPTPNPRYADELCTYDPQTEILYTDKLFGAHICGDQVFDEGWATINEDRRYYYDCLMAPHARQVETALDKLADFPTRLYATGHGPLVRYGLIELTHAYREWSQQQTSADLTVALIYASAYGNTATLAQAIARGITKAGVAVESINCEFADPEEIRAAVEKSAGFVMGSPTLGGHAPTPVQTALGIVLSTATNNKLAGVFGSFGWSGEAVDLIESKLKDAGYRFGFDSIRVKFKPNEVTLQMCEEAGTDFAQALKKARKVRTQSVPATNVEQAVGRIVGSLCVVTAKQGEISSAMLASWVAQASFNPPGLTIAVAKDRAVETLTHTGNKFVLNVLKEGNHLGLMKHFLKPFGPAQDRFADVATAEAENGSPVLQDALAYLECSVQNRMESGDHWLVYATVENGKVLNQDGVTAVHHRKSGNHY.

A zinc metallo-hydrolase region spans residues 38 to 231 (AKGTTANSYL…FPTRLYATGH (194 aa)). The 143-residue stretch at 260–402 (VALIYASAYG…AGTDFAQALK (143 aa)) folds into the Flavodoxin-like domain. A flavodoxin-reductase-like region spans residues 421 to 570 (VGRIVGSLCV…VHHRKSGNHY (150 aa)).

In the N-terminal section; belongs to the zinc metallo-hydrolase group 3 family. It in the C-terminal section; belongs to the flavodoxin reductase family. Requires Fe cation as cofactor.

In terms of biological role, mediates electron transfer from NADH to oxygen, reducing it to water. This modular protein has 3 redox cofactors, in other organisms the same activity requires 2 or 3 proteins. This Nostoc sp. (strain PCC 7120 / SAG 25.82 / UTEX 2576) protein is Putative diflavin flavoprotein A 6 (dfa6).